A 485-amino-acid polypeptide reads, in one-letter code: NADH-quinone oxidoreductase subunit N (485 aa).

Transmembrane regions (helical) follow at residues 8 to 28 (LIAL…MLSI), 35 to 55 (FLNA…LWFV), 71 to 91 (GFAM…CTFA), 105 to 125 (FYLL…ANHL), 127 to 147 (SLFL…GYAF), 159 to 179 (YTIL…LVYA), 203 to 223 (LLAG…LVPF), 235 to 255 (PAPV…GVVM), 271 to 291 (VVLA…ALSQ), 297 to 317 (LLGY…IALQ), 326 to 346 (VGVY…VVSL), 373 to 393 (AAVM…LGFI), 408 to 430 (WWLV…RVAV), and 455 to 475 (IVVL…QPLI).

This sequence belongs to the complex I subunit 2 family. NDH-1 is composed of 13 different subunits. Subunits NuoA, H, J, K, L, M, N constitute the membrane sector of the complex.

The protein localises to the cell inner membrane. The enzyme catalyses a quinone + NADH + 5 H(+)(in) = a quinol + NAD(+) + 4 H(+)(out). Functionally, NDH-1 shuttles electrons from NADH, via FMN and iron-sulfur (Fe-S) centers, to quinones in the respiratory chain. The immediate electron acceptor for the enzyme in this species is believed to be ubiquinone. Couples the redox reaction to proton translocation (for every two electrons transferred, four hydrogen ions are translocated across the cytoplasmic membrane), and thus conserves the redox energy in a proton gradient. The sequence is that of NADH-quinone oxidoreductase subunit N from Escherichia coli O7:K1 (strain IAI39 / ExPEC).